Reading from the N-terminus, the 360-residue chain is MKQEFTRIAVKVGSNVLARRDGTLDVTRMSALVDQIAELNKSGVEIILISSGAVASGRSEIHPQKKLDSVDQRQLFSAVGQAKLINRYYELFREHGIAVGQVLTTKENFSTRRHYLNQKNCMTVMLENGVIPIVNENDTISVSELMFTDNDELSGLIASMMDAQALIILSNIDGIYNGSPSDPASAVIREIEHGKDLSNYIQATKSSFGRGGMLTKTNIARKVADEGITVIIANGKRDNILVDLLQQPDDTVCTRFIPSTEAVSSVKKWIAHSEGFAKGEIHINECATDILSSEKAASILPVGITHIEGEFEKDDIVRIMDFLGNQVGVGKANCDSAQAREAMGKHGKKPVVHYDYLYIE.

Position 11 (Lys-11) interacts with ATP. Substrate is bound by residues Ser-51, Asp-138, and Asn-150. The region spanning 278–356 (KGEIHINECA…GKKPVVHYDY (79 aa)) is the PUA domain.

The protein belongs to the glutamate 5-kinase family.

It is found in the cytoplasm. It carries out the reaction L-glutamate + ATP = L-glutamyl 5-phosphate + ADP. It functions in the pathway amino-acid biosynthesis; L-proline biosynthesis; L-glutamate 5-semialdehyde from L-glutamate: step 1/2. Functionally, catalyzes the transfer of a phosphate group to glutamate to form L-glutamate 5-phosphate. The polypeptide is Glutamate 5-kinase (Bacteroides thetaiotaomicron (strain ATCC 29148 / DSM 2079 / JCM 5827 / CCUG 10774 / NCTC 10582 / VPI-5482 / E50)).